Consider the following 621-residue polypeptide: Threonine--tRNA ligase (621 aa).

Positions 1-137 (MRILQLHCDS…ESSKVVTKDS (137 aa)) are editing domain. Residues 128-150 (ESSKVVTKDSTTKDDDEDTSDAL) form a disordered region. A catalytic region spans residues 202 to 501 (PHVALMKKLA…SKKGKKPQLP (300 aa)). Residues cysteine 294, histidine 346, and histidine 470 each coordinate Zn(2+). The span at 598-612 (QTSGKPYTGLNQSQH) shows a compositional bias: polar residues. Residues 598 to 621 (QTSGKPYTGLNQSQHLSKRPQLMV) are disordered.

Belongs to the class-II aminoacyl-tRNA synthetase family. As to quaternary structure, homodimer. Requires Zn(2+) as cofactor.

Its subcellular location is the cytoplasm. The enzyme catalyses tRNA(Thr) + L-threonine + ATP = L-threonyl-tRNA(Thr) + AMP + diphosphate + H(+). Functionally, catalyzes the attachment of threonine to tRNA(Thr) in a two-step reaction: L-threonine is first activated by ATP to form Thr-AMP and then transferred to the acceptor end of tRNA(Thr). Also edits incorrectly charged L-seryl-tRNA(Thr). This is Threonine--tRNA ligase from Nitrosopumilus maritimus (strain SCM1).